The following is a 327-amino-acid chain: tRNA uridine(34) hydroxylase (327 aa).

The 95-residue stretch at 130–224 (LDEDTVVLDT…YGKDPEVQGE (95 aa)) folds into the Rhodanese domain. The active-site Cysteine persulfide intermediate is the Cys-184.

Belongs to the TrhO family.

It catalyses the reaction uridine(34) in tRNA + AH2 + O2 = 5-hydroxyuridine(34) in tRNA + A + H2O. Its function is as follows. Catalyzes oxygen-dependent 5-hydroxyuridine (ho5U) modification at position 34 in tRNAs. The sequence is that of tRNA uridine(34) hydroxylase from Streptococcus thermophilus (strain CNRZ 1066).